The sequence spans 1389 residues: CRISPR-associated endoribonuclease Cas13a (1389 aa).

The interval 1-347 is NTD; sequence MGNLFGHKRW…DKHEKFKIER (347 aa). Arg-219 is a binding site for crRNA. 3 binds crRNA regions span residues 330–342, 405–408, and 432–436; these read YIKSYVLLDKHEK, KKHY, and YRYLK. The segment at 348–498 is helical-1; it reads ENKKDKIVKF…KLRHNDIDMT (151 aa). Catalysis depends on for pre-crRNA processing residues Arg-438 and Lys-441. A crRNA-binding site is contributed by Lys-441. A binds crRNA region spans residues 471–475; that stretch reads KILKR. Lys-489 serves as a coordination point for crRNA. The tract at residues 499-636 is HEPN-like fold 1-I; it reads TVNTDDFSRL…LKISDEEVSK (138 aa). A binds crRNA region spans residues 502-509; it reads TDDFSRLH. Residues Arg-597 and His-602 each act as for target ssRNA cleavage in the active site. The helical-2 stretch occupies residues 637 to 828; it reads ALNLDVVFKD…ERITVKTSDK (192 aa). Gln-759 contacts crRNA. Residues 829–899 are HEPN-like fold 1-II; the sequence is TIVINDDFEY…ECITENWNLN (71 aa). A binds crRNA region spans residues 853–858; that stretch reads NKIRNR. Residue Trp-865 participates in crRNA binding. Coiled-coil stretches lie at residues 893–920, 968–1046, and 1101–1131; these read TENWNLNLEEFIQKMKEIEKDFDDFKIQ, EIDK…FQEI, and KNKISEIDAILKNLNDKLNGYSKEYKEKYIK. The segment at 900–1170 is linker; that stretch reads LEEFIQKMKE…EYKKIRDLVE (271 aa). The tract at residues 1170-1290 is HEPN-like fold 2; that stretch reads EFNYLNKIES…ISHFYIVRNP (121 aa). Active-site for target ssRNA cleavage residues include Arg-1278 and His-1283. Binds crRNA stretches follow at residues 1311–1316 and 1338–1339; these read TRYNNS and KK.

It belongs to the CRISPR-associated endoribonuclease Cas13a family. In terms of assembly, monomer. Mg(2+) is required as a cofactor.

RNase activity on target is decreased by EDTA. Target RNA acts as an activator for non-specific ssRNA degradation. In terms of biological role, CRISPR (clustered regularly interspaced short palindromic repeat), is an adaptive immune system that provides protection against mobile genetic elements (viruses, transposable elements and conjugative plasmids). CRISPR clusters contain sequences complementary to antecedent mobile elements (spacers) and target invading nucleic acids. Unlike many single-component effectors, this CRISPR-Cas system targets RNA. CRISPR clusters are transcribed from pre-CRISPR RNA (crRNA) and processed into crRNA (optimally 28 nucleotides in this system) by this protein. This protein processes pre-crRNA at a 'non-typical' site 1 nucleotide upstream of the pre-crRNA stem-loop; it cleaves pre-crRNA from L.buccalis and L.wadei in a similar fashion, whereas the enzymes from the latter 2 bacteria cleave their own pre-crRNA 3 nt further upstream. When the appropriate target sequences are cloned into the CRISPR array, confers immunity to ssRNA(+) enterobacteria phage MS2. Cleaves linear target ssRNA in a crRNA-dependent fashion, preferentially before U residues; has no activity on partially dsRNA, ssDNA or dsDNA. RNA secondary structure surrounding the target influence the cleavage site and efficiency; unlike other CRISPR-Cas effectors Cas13a cleaves outside of the crRNA binding site. In the presence of a viable RNA target other RNAs are also degraded (called collateral RNA degradation), suggesting this type of CRISPR-Cas might also prevent viral spread by inducing programmed cell death or dormancy. This system has a 3' protospacer flanking site (PFS), it does not cleave when the 3' PFS is G (PFS is equivalent to PAM, the protospacer adjacent motif). Mutations of its active site residues results in an RNA-programmed RNA-binding protein. This Leptotrichia shahii (strain DSM 19757 / CCUG 47503 / CIP 107916 / JCM 16776 / LB37) protein is CRISPR-associated endoribonuclease Cas13a.